The sequence spans 32 residues: Photosystem I reaction center subunit XII (32 aa).

Residues 10-27 traverse the membrane as a helical segment; it reads VVALISALVTGILALRLG.

The protein belongs to the PsaM family.

It is found in the plastid. It localises to the chloroplast thylakoid membrane. This is Photosystem I reaction center subunit XII from Zygnema circumcarinatum (Green alga).